A 211-amino-acid polypeptide reads, in one-letter code: MLNAIRKNGLTLAIFACATTGLVAMTQYLTKDQITLQEQKQLSSVLNQVIPESAHDNLLFESCTLVSDSALGSDKAMPAYIATRNGQATAIAIESVAPDGYNGAIKIITGIDTSGTVLGTRVLSHQETPGLGDKIDLRVTDWITSFTGKQLNDGNYNSWKVRKDGGEFDQFTGATITPRAVVKAVRNTVEFVNTHREQILNQPLNCGGHYE.

The helical transmembrane segment at 9–29 (GLTLAIFACATTGLVAMTQYL) threads the bilayer. Thr175 bears the FMN phosphoryl threonine mark.

The protein belongs to the RnfG family. The complex is composed of six subunits: RnfA, RnfB, RnfC, RnfD, RnfE and RnfG. FMN is required as a cofactor.

The protein localises to the cell inner membrane. In terms of biological role, part of a membrane-bound complex that couples electron transfer with translocation of ions across the membrane. The protein is Ion-translocating oxidoreductase complex subunit G of Vibrio vulnificus (strain YJ016).